We begin with the raw amino-acid sequence, 322 residues long: Acetyl-coenzyme A carboxylase carboxyl transferase subunit alpha (322 aa).

Residues 39–293 (RLQKKSQALT…RRALTDTLAE (255 aa)) enclose the CoA carboxyltransferase C-terminal domain.

Belongs to the AccA family. As to quaternary structure, acetyl-CoA carboxylase is a heterohexamer composed of biotin carboxyl carrier protein (AccB), biotin carboxylase (AccC) and two subunits each of ACCase subunit alpha (AccA) and ACCase subunit beta (AccD).

The protein localises to the cytoplasm. The enzyme catalyses N(6)-carboxybiotinyl-L-lysyl-[protein] + acetyl-CoA = N(6)-biotinyl-L-lysyl-[protein] + malonyl-CoA. Its pathway is lipid metabolism; malonyl-CoA biosynthesis; malonyl-CoA from acetyl-CoA: step 1/1. In terms of biological role, component of the acetyl coenzyme A carboxylase (ACC) complex. First, biotin carboxylase catalyzes the carboxylation of biotin on its carrier protein (BCCP) and then the CO(2) group is transferred by the carboxyltransferase to acetyl-CoA to form malonyl-CoA. In Thiobacillus denitrificans (strain ATCC 25259 / T1), this protein is Acetyl-coenzyme A carboxylase carboxyl transferase subunit alpha.